The primary structure comprises 265 residues: H-2 class II histocompatibility antigen, A-Q beta chain (265 aa).

The first 27 residues, M1–G27, serve as a signal peptide directing secretion. Positions G28–L122 are beta-1. Over G28–M227 the chain is Extracellular. Cystine bridges form between C42-C106 and C145-C201. N46 carries an N-linked (GlcNAc...) asparagine glycan. The tract at residues E123–R217 is beta-2. An Ig-like C1-type domain is found at P125–T213. Residues A218–M227 form a connecting peptide region. The helical transmembrane segment at L228–I247 threads the bilayer. Over R248–Q265 the chain is Cytoplasmic.

Belongs to the MHC class II family. Post-translationally, ubiquitinated in immature dendritic cells leading to down-regulation of MHC class II.

The protein localises to the membrane. The sequence is that of H-2 class II histocompatibility antigen, A-Q beta chain (H2-Ab1) from Mus musculus (Mouse).